A 215-amino-acid polypeptide reads, in one-letter code: Ras-related protein Rab-5A (215 aa).

GTP is bound by residues serine 29, alanine 30, glycine 32, lysine 33, serine 34, serine 35, histidine 46, glutamate 47, threonine 52, and glycine 78. Serine 34 contacts Mg(2+). 2 consecutive short sequence motifs (switch) follow at residues 44–56 (QFHE…IGAA) and 77–93 (AGQE…YRGA). Threonine 52 is a Mg(2+) binding site. Serine 84 is modified (phosphoserine). Residues asparagine 133, lysine 134, aspartate 136, alanine 164, and lysine 165 each coordinate GTP. The disordered stretch occupies residues 181–215 (LPKNEPQNPGANSARGRGVDLTEPTQPTRSQCCSN). Positions 203–215 (EPTQPTRSQCCSN) are enriched in polar residues. 2 S-geranylgeranyl cysteine lipidation sites follow: cysteine 212 and cysteine 213.

It belongs to the small GTPase superfamily. Rab family. In terms of assembly, interacts with GDI1; this promotes dissociation from membranes; phosphorylation at Ser-84 disrupts this interaction. Interacts with GDI2; phosphorylation at Ser-84 disrupts the interaction. Binds EEA1. Interacts with ALS2CL, SUN2, ZFYVE20 and RUFY1. Interacts with RIN1 and GAPVD1, which regulate its pathway, probably by acting as a GEF. Interacts with SGSM1 and SGSM3. Interacts with PIK3CB. Interacts with RABEP1 and RINL. Interacts with OCRL and INPP5F. May be a component of a complex composed of RAB5A, DYN2 and PIK3C3. Does not interact with the BLOC-3 complex (heterodimer of HPS1 and HPS4). Interacts with CLN5. Interacts with APPL2. Interacts with F8A1/F8A2/F8A3. Found in a complex with F8A1/F8A2/F8A3, HTT and RAB5A; mediates the recruitment of HTT by RAB5A onto early endosomes. Interacts with ATP9A. Interacts with PPP1R21; mediates the recruitment of FERRY complex by RAB5A onto early endosomes. The cofactor is Mg(2+). Phosphorylation of Ser-84 in the switch II region by LRRK2 prevents the association of RAB regulatory proteins, including RAB GDP dissociation inhibitors GDI1 and GDI2.

Its subcellular location is the cell membrane. It localises to the early endosome membrane. The protein resides in the melanosome. It is found in the cytoplasmic vesicle. The protein localises to the cell projection. Its subcellular location is the ruffle. It localises to the cytoplasm. The protein resides in the cytosol. It is found in the membrane. The protein localises to the phagosome membrane. Its subcellular location is the endosome membrane. The catalysed reaction is GTP + H2O = GDP + phosphate + H(+). Regulated by guanine nucleotide exchange factors (GEFs) including RINL, which promote the exchange of bound GDP for free GTP. Regulated by GTPase activating proteins (GAPs) which increase the GTP hydrolysis activity. Inhibited by GDP dissociation inhibitors (GDIs). Functionally, the small GTPases Rab are key regulators of intracellular membrane trafficking, from the formation of transport vesicles to their fusion with membranes. Rabs cycle between an inactive GDP-bound form and an active GTP-bound form that is able to recruit to membranes different sets of downstream effectors directly responsible for vesicle formation, movement, tethering and fusion. RAB5A is required for the fusion of plasma membranes and early endosomes. Contributes to the regulation of filopodia extension. Required for the exosomal release of SDCBP, CD63, PDCD6IP and syndecan. Regulates maturation of apoptotic cell-containing phagosomes, probably downstream of DYN2 and PIK3C3. The chain is Ras-related protein Rab-5A (RAB5A) from Canis lupus familiaris (Dog).